The chain runs to 129 residues: Phosphoribosyl-AMP cyclohydrolase (129 aa).

Aspartate 85 provides a ligand contact to Mg(2+). Position 86 (cysteine 86) interacts with Zn(2+). Mg(2+) contacts are provided by aspartate 87 and aspartate 89. Residues cysteine 102 and cysteine 109 each contribute to the Zn(2+) site.

Belongs to the PRA-CH family. As to quaternary structure, homodimer. The cofactor is Mg(2+). Zn(2+) serves as cofactor.

The protein resides in the cytoplasm. It catalyses the reaction 1-(5-phospho-beta-D-ribosyl)-5'-AMP + H2O = 1-(5-phospho-beta-D-ribosyl)-5-[(5-phospho-beta-D-ribosylamino)methylideneamino]imidazole-4-carboxamide. Its pathway is amino-acid biosynthesis; L-histidine biosynthesis; L-histidine from 5-phospho-alpha-D-ribose 1-diphosphate: step 3/9. Its function is as follows. Catalyzes the hydrolysis of the adenine ring of phosphoribosyl-AMP. This is Phosphoribosyl-AMP cyclohydrolase from Methanococcus maripaludis (strain C7 / ATCC BAA-1331).